The primary structure comprises 270 residues: Interleukin-1 alpha (270 aa).

A propeptide spanning residues 1–112 (MAKVPDLFED…EVEEEIMKPR (112 aa)) is cleaved from the precursor. The residue at position 82 (Lys-82) is an N6-acetyllysine. The tract at residues 82–86 (KKRRL) is nuclear localization signal (NLS). A Phosphoserine modification is found at Ser-87. N-linked (GlcNAc...) asparagine glycosylation occurs at Asn-139.

The protein belongs to the IL-1 family. Monomer. Interacts with TMED10; the interaction mediates the translocation from the cytoplasm into the ERGIC (endoplasmic reticulum-Golgi intermediate compartment) and thereby secretion. Interacts with IL1R1. Interacts with S100A13; this interaction is the first step in the export of IL1A, followed by direct translocation of this complex across the plasma membrane. Post-translationally, acetylated within its nuclear localization sequence, which impacts subcellular localization. In terms of processing, proteolytic processed by CAPN1 in a calcium-dependent manner. Cleavage from 31 kDa precursor to 18 kDa biologically active molecules. Phosphorylated. Phosphorylation greatly enhances susceptibility to digestion and promotes the conversion of pre-IL1A alpha to the biologically active IL1A.

It localises to the nucleus. The protein resides in the cytoplasm. Its subcellular location is the secreted. Its function is as follows. Cytokine constitutively present intracellularly in nearly all resting non-hematopoietic cells that plays an important role in inflammation and bridges the innate and adaptive immune systems. After binding to its receptor IL1R1 together with its accessory protein IL1RAP, forms the high affinity interleukin-1 receptor complex. Signaling involves the recruitment of adapter molecules such as MYD88, IRAK1 or IRAK4. In turn, mediates the activation of NF-kappa-B and the three MAPK pathways p38, p42/p44 and JNK pathways. Within the cell, acts as an alarmin and cell death results in its liberation in the extracellular space after disruption of the cell membrane to induce inflammation and alert the host to injury or damage. In addition to its role as a danger signal, which occurs when the cytokine is passively released by cell necrosis, directly senses DNA damage and acts as signal for genotoxic stress without loss of cell integrity. The sequence is that of Interleukin-1 alpha (IL1A) from Felis catus (Cat).